A 284-amino-acid polypeptide reads, in one-letter code: ATP synthase gamma chain (284 aa).

Belongs to the ATPase gamma chain family. In terms of assembly, F-type ATPases have 2 components, CF(1) - the catalytic core - and CF(0) - the membrane proton channel. CF(1) has five subunits: alpha(3), beta(3), gamma(1), delta(1), epsilon(1). CF(0) has three main subunits: a, b and c.

Its subcellular location is the cell membrane. Produces ATP from ADP in the presence of a proton gradient across the membrane. The gamma chain is believed to be important in regulating ATPase activity and the flow of protons through the CF(0) complex. The chain is ATP synthase gamma chain from Bacillus licheniformis (strain ATCC 14580 / DSM 13 / JCM 2505 / CCUG 7422 / NBRC 12200 / NCIMB 9375 / NCTC 10341 / NRRL NRS-1264 / Gibson 46).